The sequence spans 354 residues: V-type proton ATPase subunit C (354 aa).

The protein belongs to the V-ATPase C subunit family. V-ATPase is a heteromultimeric enzyme composed of a peripheral catalytic V1 complex (components A to H) attached to an integral membrane V0 proton pore complex (components: a, c, c', c'' and d).

Its subcellular location is the vacuole membrane. Its function is as follows. Subunit of the peripheral V1 complex of vacuolar ATPase. Subunit C is necessary for the assembly of the catalytic sector of the enzyme and is likely to have a specific function in its catalytic activity. V-ATPase is responsible for acidifying a variety of intracellular compartments in eukaryotic cells. In Hordeum vulgare (Barley), this protein is V-type proton ATPase subunit C (VATC).